A 297-amino-acid chain; its full sequence is Small ribosomal subunit biogenesis GTPase RsgA (297 aa).

A CP-type G domain is found at 65–223 (TNEIGRPAVA…IADTPGFSAI (159 aa)). GTP is bound by residues 114 to 117 (SKAD) and 166 to 174 (GQSGAGKST). Positions 247, 252, 254, and 260 each coordinate Zn(2+).

Belongs to the TRAFAC class YlqF/YawG GTPase family. RsgA subfamily. Monomer. Associates with 30S ribosomal subunit, binds 16S rRNA. The cofactor is Zn(2+).

The protein localises to the cytoplasm. One of several proteins that assist in the late maturation steps of the functional core of the 30S ribosomal subunit. Helps release RbfA from mature subunits. May play a role in the assembly of ribosomal proteins into the subunit. Circularly permuted GTPase that catalyzes slow GTP hydrolysis, GTPase activity is stimulated by the 30S ribosomal subunit. The protein is Small ribosomal subunit biogenesis GTPase RsgA of Lactobacillus gasseri (strain ATCC 33323 / DSM 20243 / BCRC 14619 / CIP 102991 / JCM 1131 / KCTC 3163 / NCIMB 11718 / NCTC 13722 / AM63).